Consider the following 240-residue polypeptide: LexA repressor (240 aa).

The segment at residues 26–46 is a DNA-binding region (H-T-H motif); it reads FDEMKDALDLASKSGIHRLIT. Residues 78–113 form a disordered region; that stretch reads QPRRGFSPSVIEGSLGKPQPVQPPAPAKPANDENNS. Catalysis depends on for autocatalytic cleavage activity residues Ser-160 and Lys-198.

The protein belongs to the peptidase S24 family. In terms of assembly, homodimer.

The catalysed reaction is Hydrolysis of Ala-|-Gly bond in repressor LexA.. Represses a number of genes involved in the response to DNA damage (SOS response), including recA and lexA. In the presence of single-stranded DNA, RecA interacts with LexA causing an autocatalytic cleavage which disrupts the DNA-binding part of LexA, leading to derepression of the SOS regulon and eventually DNA repair. The chain is LexA repressor from Rhizobium rhizogenes (strain K84 / ATCC BAA-868) (Agrobacterium radiobacter).